The primary structure comprises 652 residues: Leucine aminopeptidase 2 (652 aa).

Residues 165–167 (QLE) and 293–298 (PYGGME) contribute to the a peptide site. Position 322 (H322) interacts with Zn(2+). E323 acts as the Proton acceptor in catalysis. Zn(2+) contacts are provided by H326 and E345. Residue Y411 is the Proton donor of the active site.

This sequence belongs to the peptidase M1 family. Zn(2+) is required as a cofactor.

The protein localises to the cytoplasm. Its subcellular location is the nucleus. It carries out the reaction an epoxide + H2O = an ethanediol. Aminopeptidase that preferentially cleaves di- and tripeptides. Also has low epoxide hydrolase activity (in vitro). Can hydrolyze the epoxide leukotriene LTA(4) but it forms preferentially 5,6-dihydroxy-7,9,11,14-eicosatetraenoic acid rather than the cytokine leukotriene B(4) as the product compared to the homologous mammalian enzyme (in vitro). In Candida glabrata (strain ATCC 2001 / BCRC 20586 / JCM 3761 / NBRC 0622 / NRRL Y-65 / CBS 138) (Yeast), this protein is Leucine aminopeptidase 2.